We begin with the raw amino-acid sequence, 268 residues long: Microtubule-associated protein RP/EB family member 1 (268 aa).

At alanine 2 the chain carries N-acetylalanine. The Calponin-homology (CH) domain maps to 14-116; sequence NLSRHDMLAW…FVQWFKKFFD (103 aa). Lysine 66 carries the N6-crotonyllysine modification. Tyrosine 124 is subject to Phosphotyrosine. An interaction with MTUS2/TIP150 region spans residues 124 to 268; the sequence is YDPVAARQGQ…GGPQEEQEEY (145 aa). The tract at residues 146–187 is disordered; the sequence is LNKPKKPLTSSSAAPQRPISTQRTAAAPKAGPGVVRKNPGVG. A compositionally biased stretch (polar residues) spans 153-169; that stretch reads LTSSSAAPQRPISTQRT. Phosphoserine is present on residues serine 155 and serine 165. One can recognise an EB1 C-terminal domain in the interval 185-255; the sequence is GVGNGDDEAA…LYATDEGFVI (71 aa). The tract at residues 185–268 is interaction with CDK5RAP2; sequence GVGNGDDEAA…GGPQEEQEEY (84 aa). An interaction with APC region spans residues 206–211; that stretch reads TVEDLE. The DCTN1-binding stretch occupies residues 208 to 268; sequence EDLEKERDFY…GGPQEEQEEY (61 aa). An N6-acetyllysine modification is found at lysine 220. The tract at residues 220-242 is APC-binding; that stretch reads KLRNIELICQENEGENDPVLQRI. Residues 232–255 form an interaction with SKA1 region; that stretch reads EGENDPVLQRIVDILYATDEGFVI.

It belongs to the MAPRE family. Homodimer. Heterodimer with MAPRE3. Interacts with DCTN1, DCTN2, TERF1 and dynein intermediate chain. Interaction with DIAPH1 and DIAPH2. Interacts (via C-terminal residues 206-211) with APC (via C-terminal residues 2674-2843); the interaction inhibits association with and bundling of F-actin. Interacts with CLASP2, DST, KIF2C and STIM1; probably required for their targeting to the growing microtubule plus ends. Interacts with MTUS2; interaction is direct and probably targets MTUS2 to microtubules. Interacts (via C-terminus) with SKA1 (via SXIP motif); the interaction is direct and stabilizes the kinetochore-microtubule attachment of the SKA1 complex. Interacts with APC2. Interacts with CLASP1. Interacts with CDK5RAP2. Interacts with MACF1. Interacts with RABL2/RABL2A; binds preferentially to GTP-bound RABL2. Interacts with KCNAB2. Interacts (via C-terminus) with CLIP1. Interacts with SLAIN2 and SLAIN1. Interacts with KIF18B; this interaction is required for efficient accumulation of KIF18B at microtubule plus ends. Interacts with MISP. Interacts with KNSTRN. Interacts with NCKAP5L. Interacts with CAMSAP2. Interacts with PDE4DIP isoform 13/MMG8/SMYLE; this interaction is required for its recruitment to the Golgi apparatus. Forms a pericentrosomal complex with AKAP9, CDK5RAP2 and PDE4DIP isoform 13/MMG8/SMYLE; within this complex, MAPRE1 binding to CDK5RAP2 may be mediated by PDE4DIP. Interacts with AKNA. Interacts with GAS2L1, GAS2L2, and GAS2L3. Interacts with RARRES1 and AGBL2. In terms of processing, acetylation at Lys-220 by KAT2B/PCAF promotes dynamic kinetochore-microtubule interactions in early mitosis. Post-translationally, crotonylated by KAT5 during mitosis, promoting astral microtubule plasticity and dynamic connection between astral microtubules and the cortex during mitotic chromosome segregation, thereby ensuring accurate spindle positioning in mitosis. Decrotonylated by HDAC3. As to expression, ubiquitously expressed.

The protein resides in the cytoplasm. Its subcellular location is the cytoskeleton. It is found in the microtubule organizing center. It localises to the centrosome. The protein localises to the golgi apparatus. The protein resides in the spindle. Its subcellular location is the spindle pole. Functionally, plus-end tracking protein (+TIP) that binds to the plus-end of microtubules and regulates the dynamics of the microtubule cytoskeleton. Recruits other +TIP proteins to microtubules by binding to a conserved Ser-X-Leu-Pro (SXLP) motif in their polypeptide chains. Promotes cytoplasmic microtubule nucleation and elongation. Involved in mitotic spindle positioning by stabilizing microtubules and promoting dynamic connection between astral microtubules and the cortex during mitotic chromosome segregation. Assists chromosome alignment in metaphase by recruiting the SKA complex to the spindle and stabilizing its interactions with microtubule bundles (K-fibers). Also acts as a regulator of minus-end microtubule organization: interacts with the complex formed by AKAP9 and PDE4DIP, leading to recruit CAMSAP2 to the Golgi apparatus, thereby tethering non-centrosomal minus-end microtubules to the Golgi, an important step for polarized cell movement. Promotes elongation of CAMSAP2-decorated microtubule stretches on the minus-end of microtubules. Acts as a regulator of autophagosome transport via interaction with CAMSAP2. Functions downstream of Rho GTPases and DIAPH1 in stable microtubule formation. May play a role in cell migration. This Homo sapiens (Human) protein is Microtubule-associated protein RP/EB family member 1.